Here is a 197-residue protein sequence, read N- to C-terminus: Putative RNA-binding protein EEED8.12 (197 aa).

Positions 61–138 (KSVFIGNVDF…RPIVVTAKRT (78 aa)) constitute an RRM domain. The tract at residues 142–166 (GMGHGVRGSSRGTFGRGRGAARGAP) is disordered.

The polypeptide is Putative RNA-binding protein EEED8.12 (Caenorhabditis elegans).